A 425-amino-acid chain; its full sequence is MYEYSFNPNIDHEPGSVESQQSTIYSDSDDSDDSFLDDEVIPPKEQAMRKIEFALADIKRQMDNKEKSLTLRISTSKSHFCLRYTAKRKGKLDRDLHCLHQVYDLLENDKRSTKRELYYEHKAVYGNQKYLDSSIKSICELLNESRANLNILSCGRGIIRGAITFLVENVGVIDARVQEVLITDALLFSNIISEADFILVVEKDTTFQKLMDENFQAMFPRGILATSKGYPDIATRNVLKMLSEKRKFPIYGLFDADPHGIEIYLTYKYGPTKEFAEGRGAFVPTIEWIGLFPTDFHRFTIDQSQCLPLVRTDFVKIEKMIPRSIQLGEIVVTRELDWMIQNKFKMELESINMCGQEYMARFLIAPRVMSIEKEIPIQPETIINEYHEDSQCSLSTDDDREAKDDDYIDSDAEEKFQNMIDNDSD.

Positions 1–38 (MYEYSFNPNIDHEPGSVESQQSTIYSDSDDSDDSFLDD) are disordered. The 144-residue stretch at 15–158 (GSVESQQSTI…LNILSCGRGI (144 aa)) folds into the Topo IIA-type catalytic domain. Positions 27–38 (DSDDSDDSFLDD) are enriched in acidic residues. Tyrosine 119 (O-(5'-phospho-DNA)-tyrosine intermediate) is an active-site residue. Mg(2+)-binding residues include glutamate 202 and aspartate 255.

This sequence belongs to the TOP6A family. The cofactor is Mg(2+).

The protein localises to the nucleus. It catalyses the reaction ATP-dependent breakage, passage and rejoining of double-stranded DNA.. In terms of biological role, required for meiotic recombination. Mediates DNA cleavage that forms the double-strand breaks (DSB) that initiate meiotic recombination. The polypeptide is Meiotic recombination protein spo-11 (spo-11) (Caenorhabditis elegans).